Here is a 332-residue protein sequence, read N- to C-terminus: Ornithine carbamoyltransferase 1, catabolic (332 aa).

Carbamoyl phosphate is bound by residues 56–59, Gln83, Arg107, and 134–137; these read STRT and HPTQ. Residues Asn167, Asp231, and 235–236 contribute to the L-ornithine site; that span reads SM. Residues 273–274 and Arg318 contribute to the carbamoyl phosphate site; that span reads CL.

It belongs to the aspartate/ornithine carbamoyltransferase superfamily. OTCase family.

The protein localises to the cytoplasm. It carries out the reaction carbamoyl phosphate + L-ornithine = L-citrulline + phosphate + H(+). Its pathway is amino-acid degradation; L-arginine degradation via ADI pathway; carbamoyl phosphate from L-arginine: step 2/2. In terms of biological role, reversibly catalyzes the transfer of the carbamoyl group from carbamoyl phosphate (CP) to the N(epsilon) atom of ornithine (ORN) to produce L-citrulline. This chain is Ornithine carbamoyltransferase 1, catabolic (arcB1), found in Staphylococcus epidermidis (strain ATCC 12228 / FDA PCI 1200).